Reading from the N-terminus, the 814-residue chain is Origin of replication complex subunit 1 (814 aa).

Residues 1-15 (MDLSATPSRSKSGLR) show a composition bias toward polar residues. The segment at 1-127 (MDLSATPSRS…PKKPKKRAYY (127 aa)) is disordered. Composition is skewed to low complexity over residues 51–62 (APMSPVTPSSVR) and 69–80 (ETPTKVTSETPV). A Nuclear localization signal motif is present at residues 105–112 (PKRQRQRQ). Basic residues predominate over residues 108-127 (QRQRQRQRQQPKKPKKRAYY). The tract at residues 157–181 (DPEAEECRVCFRAGAAVMVECDVCL) is histone H3 binding. Residues 160–209 (AEECRVCFRAGAAVMVECDVCLGGFHLRCVRPPLRRVPEGDWACPYCEAE) form a PHD-type zinc finger. Positions 163, 166, 177, 180, 185, and 188 each coordinate Zn(2+). A histone H3 binding region spans residues 197-201 (PEGDW). Positions 203 and 206 each coordinate Zn(2+). Positions 218 to 335 (PKPPEGKRIV…IHWHNFKRLA (118 aa)) constitute a BAH domain. The interval 310–315 (ASDQGD) is histone H3 binding. Acidic residues-rich tracts occupy residues 339-349 (DEPETKEDPGD) and 360-373 (SDSD…EEEE). Residues 339–384 (DEPETKEDPGDEPYNAGNDYVSDSDEDSEYDEEEEPTKCSSARTHQ) form a disordered region. Residues 433–804 (PKSLPCRDKE…DDVTFALKES (372 aa)) are necessary and sufficient for ORC complex assembly. Residues 468–475 (GVPGTGKT) and 468–476 (GVPGTGKTM) contribute to the ATP site. Residues D558 and E559 each coordinate Mg(2+). Residues E559, N592, and R657 each coordinate ATP.

This sequence belongs to the ORC1 family. In terms of assembly, component of the origin recognition complex (ORC) composed of at least ORC1, ORC2, ORC3, ORC4, ORC5 and ORC6. ORC is regulated in a cell-cycle and development dependent manner. It is sequentially assembled at the exit from anaphase of mitosis and disassembled as cells enter S phase. Binds unmodified and methylated histone H3. Expressed strongly in root tips and shoot apical meristem (SAM), and weakly in young leaves. Not detected in mature leaves.

Its subcellular location is the nucleus. Its function is as follows. Essential protein. Component of the origin recognition complex (ORC) that binds origins of replication. It has a role in both chromosomal replication and mating type transcriptional silencing. Binds to the ARS consensus sequence (ACS) of origins of replication. H3K4me3 effector that positively regulates the transcription of a subset of genes. Required for cell proliferation. The protein is Origin of replication complex subunit 1 of Oryza sativa subsp. japonica (Rice).